The primary structure comprises 357 residues: MVEPANTVGIPVNHIPLLKDELDIVIPTIRNLDFLEMWRPFLQPYHLIIVQDGDPSKTIAVPEGFDYELYNRNDINRILGPKASCISFKDSACRCFGYMVSKKKYIFTIDDDCFVAKDPSGKAVNALEQHIKNLLCPSTPFFFNTLYDPYREGADFVRGYPFSLREGVSTAVSHGLWLNIPDYDAPTQLVKPKERNTRYVDAVMTIPKGTLFPMCGMNLAFDRELIGPAMYFGLMGDGQPIGRYDDMWAGWCIKVICDHLGLGVKTGLPYIYHSKASNPFVNLKKEYKGIFWQEDIIPFFQSAKLTKEAVTVQQCYMELSKLVKEKLSPIDPYFDKLADAMVTWIEAWDELNPPTKA.

Val-2 bears the N-acetylvaline mark. A DXD motif motif is present at residues 110–112 (DDD). N-linked (Glc...) arginine glycosylation occurs at Arg-158.

This sequence belongs to the RGP family. Heteromers with RGP2, RGP3, RGP4 and RGP5. Mn(2+) serves as cofactor. Requires Mg(2+) as cofactor. In terms of processing, reversibly glycosylated in vitro by UDP-glucose, UDP-xylose and UDP-galactose, but not UDP-mannose. As to expression, predominantly expressed in shoot and root apical meristems. Expressed in epidermal cells of leaves, inflorescence stems and seed coat. Expressed in pollen.

It is found in the cytoplasm. Its subcellular location is the cytosol. It localises to the golgi apparatus. The enzyme catalyses UDP-beta-L-arabinofuranose = UDP-beta-L-arabinopyranose. UDP-L-arabinose mutase involved in the biosynthesis of cell wall non-cellulosic polysaccharides. Catalyzes the interconvertion of UDP-L-arabinopyranose (UDP-Arap) and UDP-L-arabinofuranose (UDP-Araf) in vitro. Preferentially catalyzes the formation of UDP-Arap from UDP-Araf. At thermodynamic equilibrium in vitro the ratio of the pyranose form over the furanose form is 95:5. Is not active on other UDP-sugars (UDP-Gal, UDP-Xyl, UDP-Glc, GDP-Man and GDP-Fuc). Functions redundantly with RGP2 and is essential for proper cell walls and pollen development. Probably involved in the formation of the pectocellulosic cell wall layer intine. Is probably active as heteromer in vivo. This chain is UDP-arabinopyranose mutase 1, found in Arabidopsis thaliana (Mouse-ear cress).